Consider the following 66-residue polypeptide: MQILTLLFAVLLLMLRAEPGLSLARGLPQDCERRGGFCSHKSCPPGIGRIGLCSKEDFCCRSRWYS.

A signal peptide spans 1–19 (MQILTLLFAVLLLMLRAEP). Residues 20–25 (GLSLAR) constitute a propeptide that is removed on maturation. 3 disulfide bridges follow: Cys31/Cys59, Cys38/Cys53, and Cys43/Cys60.

This sequence belongs to the beta-defensin family. In terms of tissue distribution, strong expression in the tongue and bone marrow. Low expression in the esophagus, trachea, lung, brain and ovary. Expressed in the ovarian stroma, but not in the ovarian follicles.

The protein localises to the secreted. Its subcellular location is the cytoplasmic granule. Its function is as follows. Has bactericidal activity. This Gallus gallus (Chicken) protein is Gallinacin-5 (GAL5).